The sequence spans 232 residues: ATP-dependent dethiobiotin synthetase BioD (232 aa).

ATP is bound at residue 16-21; sequence GVGKTV. Position 20 (Thr-20) interacts with Mg(2+). Residue Lys-41 is part of the active site. A substrate-binding site is contributed by Thr-45. Residues Asp-52, 111 to 114, 171 to 172, 200 to 202, and Glu-207 each bind ATP; these read EGIG, NQ, and PLS. 2 residues coordinate Mg(2+): Asp-52 and Glu-111.

The protein belongs to the dethiobiotin synthetase family. In terms of assembly, homodimer. Mg(2+) is required as a cofactor.

Its subcellular location is the cytoplasm. It carries out the reaction (7R,8S)-7,8-diammoniononanoate + CO2 + ATP = (4R,5S)-dethiobiotin + ADP + phosphate + 3 H(+). The enzyme catalyses (7R,8S)-8-amino-7-(carboxyamino)nonanoate + ATP = (4R,5S)-dethiobiotin + ADP + phosphate + H(+). It participates in cofactor biosynthesis; biotin biosynthesis; biotin from 7,8-diaminononanoate: step 1/2. Functionally, catalyzes a mechanistically unusual reaction, the ATP-dependent insertion of CO2 between the N7 and N8 nitrogen atoms of 7,8-diaminopelargonic acid (DAPA, also called 7,8-diammoniononanoate) to form a ureido ring. This archaea does not encode bioA (which catalyzes the formation of the precursor for this reaction in the cannonical pathway), instead it encodes bioU, which replaces bioA and also performs the first half of the cannonical BioD reaction. Thus in this archaea BioD has a different substrate. This is ATP-dependent dethiobiotin synthetase BioD from Haloferax mediterranei (strain ATCC 33500 / DSM 1411 / JCM 8866 / NBRC 14739 / NCIMB 2177 / R-4) (Halobacterium mediterranei).